Here is a 509-residue protein sequence, read N- to C-terminus: Glycogen synthase (509 aa).

Residue K47 participates in ADP-alpha-D-glucose binding.

Belongs to the glycosyltransferase 1 family. Bacterial/plant glycogen synthase subfamily.

It carries out the reaction [(1-&gt;4)-alpha-D-glucosyl](n) + ADP-alpha-D-glucose = [(1-&gt;4)-alpha-D-glucosyl](n+1) + ADP + H(+). The protein operates within glycan biosynthesis; glycogen biosynthesis. Functionally, synthesizes alpha-1,4-glucan chains using ADP-glucose. The sequence is that of Glycogen synthase from Xanthomonas oryzae pv. oryzae (strain MAFF 311018).